Here is a 457-residue protein sequence, read N- to C-terminus: MALWGGRFTQATDKRFKDFNDSLRFDYRLAEQDIEGSIGWSKALVTVNVLTQQEQQVLENALSELLIEVRSNPQKILQDDAEDIHSWVESKLIDKVGNLGKKLHTGRSRNDQVALDIKMWCKQRVTELQHSMRELQRKLVETAEHNQHVVMPGYTHLQRAQPITFAHWCMAYVEMLDRDYGRLQDAYQRMNTCPLGSGALAGTAYAIDRDLLAQDLDFAMATRNSLDSVSDRDHIIELLSTASLSMAHLSRFAEDMIIFNSGEADFVELSDRVTSGSSLMPQKKNPDACELIRGKVGRVVGALTGMLMTVKGLPLAYNKDMQEDKEGIFDALDTWQDCVDMATFVLEDIKVSVERTKEAALKGYSNSTELADYLVAKGVPFRDSHHIVGETVVYAIKVHKGLEDLSIEEFHQFSNAIEEDVYEILSLQSCLDKRCAKGGVSPLRVAEAIAEAKKRFK.

Belongs to the lyase 1 family. Argininosuccinate lyase subfamily.

The protein localises to the cytoplasm. It catalyses the reaction 2-(N(omega)-L-arginino)succinate = fumarate + L-arginine. It functions in the pathway amino-acid biosynthesis; L-arginine biosynthesis; L-arginine from L-ornithine and carbamoyl phosphate: step 3/3. In Histophilus somni (strain 129Pt) (Haemophilus somnus), this protein is Argininosuccinate lyase.